The chain runs to 560 residues: Dihydroxy-acid dehydratase (560 aa).

Aspartate 80 contributes to the Mg(2+) binding site. Cysteine 121 lines the [2Fe-2S] cluster pocket. Residues aspartate 122 and lysine 123 each contribute to the Mg(2+) site. Lysine 123 carries the N6-carboxylysine modification. Cysteine 194 is a binding site for [2Fe-2S] cluster. Residue glutamate 447 participates in Mg(2+) binding. Serine 473 functions as the Proton acceptor in the catalytic mechanism.

This sequence belongs to the IlvD/Edd family. Homodimer. It depends on [2Fe-2S] cluster as a cofactor. The cofactor is Mg(2+).

The enzyme catalyses (2R)-2,3-dihydroxy-3-methylbutanoate = 3-methyl-2-oxobutanoate + H2O. It carries out the reaction (2R,3R)-2,3-dihydroxy-3-methylpentanoate = (S)-3-methyl-2-oxopentanoate + H2O. Its pathway is amino-acid biosynthesis; L-isoleucine biosynthesis; L-isoleucine from 2-oxobutanoate: step 3/4. The protein operates within amino-acid biosynthesis; L-valine biosynthesis; L-valine from pyruvate: step 3/4. Its function is as follows. Functions in the biosynthesis of branched-chain amino acids. Catalyzes the dehydration of (2R,3R)-2,3-dihydroxy-3-methylpentanoate (2,3-dihydroxy-3-methylvalerate) into 2-oxo-3-methylpentanoate (2-oxo-3-methylvalerate) and of (2R)-2,3-dihydroxy-3-methylbutanoate (2,3-dihydroxyisovalerate) into 2-oxo-3-methylbutanoate (2-oxoisovalerate), the penultimate precursor to L-isoleucine and L-valine, respectively. The chain is Dihydroxy-acid dehydratase from Chlorobaculum tepidum (strain ATCC 49652 / DSM 12025 / NBRC 103806 / TLS) (Chlorobium tepidum).